The sequence spans 65 residues: Beta-defensin 106A (65 aa).

Positions 1–20 (MRTFLFLFVVLFFLTPAKNA) are cleaved as a signal peptide. Disulfide bonds link cysteine 26/cysteine 53, cysteine 33/cysteine 47, and cysteine 37/cysteine 54.

It belongs to the beta-defensin family. As to quaternary structure, monomer. Interacts with CCR2 (via extracellular N-terminal region); this interaction may preferentially require specific tyrosine sulfation on CCR2.

The protein localises to the secreted. Its subcellular location is the membrane. In terms of biological role, has antibacterial activity. Acts as a ligand for C-C chemokine receptor CCR2. This Hylobates lar (Lar gibbon) protein is Beta-defensin 106A (DEFB106A).